We begin with the raw amino-acid sequence, 364 residues long: Dihydroorotate dehydrogenase (quinone) (364 aa).

Residues 61–65 (AGFDK) and threonine 85 each bind FMN. Lysine 65 lines the substrate pocket. Position 110–114 (110–114 (NRMGF)) interacts with substrate. FMN contacts are provided by asparagine 139 and asparagine 170. Asparagine 170 lines the substrate pocket. Serine 173 functions as the Nucleophile in the catalytic mechanism. Residue asparagine 175 participates in substrate binding. Residues lysine 214 and alanine 242 each coordinate FMN. 243–244 (NT) contributes to the substrate binding site. FMN is bound by residues glycine 266, glycine 295, and 316–317 (YS).

It belongs to the dihydroorotate dehydrogenase family. Type 2 subfamily. As to quaternary structure, monomer. It depends on FMN as a cofactor.

The protein localises to the cell membrane. It catalyses the reaction (S)-dihydroorotate + a quinone = orotate + a quinol. Its pathway is pyrimidine metabolism; UMP biosynthesis via de novo pathway; orotate from (S)-dihydroorotate (quinone route): step 1/1. Functionally, catalyzes the conversion of dihydroorotate to orotate with quinone as electron acceptor. This chain is Dihydroorotate dehydrogenase (quinone), found in Rhodopseudomonas palustris (strain HaA2).